A 967-amino-acid polypeptide reads, in one-letter code: MDTSMTGNEIRKTFIDFFIKKGHKYVHSSSTIPLDDPTLLFANAGMNQFKPIFLGSVDPNSDMAQYIRVVNTQKCIRAGGKHNDLDDVGKDVYHHTFFEMMGNWSFGDYFKKEICAWAWELLTDVFKLSRERLYVTYFEGDPSSGLEPDLECRNIWLNLGVPEAHILPGSMKDNFWEMGETGPCGPCSELHYDRIGDREAAHLVNMDDPDVLEIWNLVFIQFNRETDGSLKLLPTKHIDCGLGLERLVSVIQNKRANYDTDFFMPIFKAIENATGVRPYSGKVGVDDVDGIDMAYRVLADHARTLTIALSDGGCPDNTGRGYVLRRILRRAVRYASEKLNAKPGFFGSLVYTVVELLGDVFPEIKKDPDSIVHVINEEEVQFLKTLLRGRNLLYRTIEKLNNSKTLPGDVAWRLYDTYGFPIDLTQLMCEEKGLNVDMEGYEKSRKESQLVSQGKAAGQEDLIALDVHAISHLQDTGIPATDDSPKYNYLPSSTDKDALYTFAPCTAKIVALRKNKEFVSEISSGQECGVILDRTSFYAEQGGQIFDEGYMVKIDDETVEFTVKNVQVKGGYVLHAGKVEGILKVGDTLSLHIDTERRRLVMNNHTGTHVLNNVLRKVLGNDSDQRGSLVMPDRLRFDFTNKGPMTIKQIKDTENEIKEIIAKNKTVYANYTSLSEAKKINGLRAMFDEHYPDPVRVVSVGVPVEDLIKNPDAPTGFETSVEFCGGSHLHRTSHIGEYVIVSEEGIAKGIRRIVAVTGPEAIKAINKLSVLENEVNNVANFIKEQNESISHKEVSKKIVDLTNEISQAQISYWKKDELRNMLKNLKKQLDDKERAEKAIIITQVTEKAKELCLERKESKYIVSELKAFGNTKALDGALKQVKQFCPNSAAMFFSVDKDADKIYCLAAVPKSDVEKGLLASEWVQSVVDIIGGKGGGKAESAQASGNNPNSLNEAIQIANEYAKSKLN.

Residues H605, H609, C724, and H728 each coordinate Zn(2+).

It belongs to the class-II aminoacyl-tRNA synthetase family. Monomer. It depends on Zn(2+) as a cofactor. Post-translationally, the N-terminus is blocked.

The protein localises to the cytoplasm. The catalysed reaction is tRNA(Ala) + L-alanine + ATP = L-alanyl-tRNA(Ala) + AMP + diphosphate. Its function is as follows. Catalyzes the attachment of alanine to tRNA(Ala) in a two-step reaction: alanine is first activated by ATP to form Ala-AMP and then transferred to the acceptor end of tRNA(Ala). Also edits incorrectly charged tRNA(Ala) via its editing domain. This chain is Alanine--tRNA ligase, cytoplasmic, found in Bombyx mori (Silk moth).